A 600-amino-acid polypeptide reads, in one-letter code: UvrABC system protein C (600 aa).

Residues 15 to 92 enclose the GIY-YIG domain; that stretch reads EKPGCYLMKD…IKKYQPYYNV (78 aa). Positions 197 to 232 constitute a UVR domain; the sequence is TSVKQDLTTKMEKASENLEFERAAEIRDQLKYIEET.

This sequence belongs to the UvrC family. Interacts with UvrB in an incision complex.

It is found in the cytoplasm. In terms of biological role, the UvrABC repair system catalyzes the recognition and processing of DNA lesions. UvrC both incises the 5' and 3' sides of the lesion. The N-terminal half is responsible for the 3' incision and the C-terminal half is responsible for the 5' incision. This is UvrABC system protein C from Lactobacillus acidophilus (strain ATCC 700396 / NCK56 / N2 / NCFM).